The sequence spans 591 residues: L-fucose isomerase (591 aa).

Residues glutamate 337 and aspartate 361 each act as proton acceptor in the active site. Mn(2+) is bound by residues glutamate 337, aspartate 361, and histidine 528.

The protein belongs to the L-fucose isomerase family. In terms of assembly, homohexamer. Mn(2+) serves as cofactor.

The protein resides in the cytoplasm. The enzyme catalyses L-fucose = L-fuculose. The protein operates within carbohydrate degradation; L-fucose degradation; L-lactaldehyde and glycerone phosphate from L-fucose: step 1/3. Converts the aldose L-fucose into the corresponding ketose L-fuculose. The polypeptide is L-fucose isomerase (Escherichia coli O6:K15:H31 (strain 536 / UPEC)).